Consider the following 349-residue polypeptide: Anthranilate phosphoribosyltransferase (349 aa).

Residues G82, 85–86 (GD), 92–95 (NVST), 110–118 (KHGNRAVSG), and S122 contribute to the 5-phospho-alpha-D-ribose 1-diphosphate site. Anthranilate is bound at residue G82. S94 is a Mg(2+) binding site. Residue N113 participates in anthranilate binding. R168 is a binding site for anthranilate. Residues D227 and E228 each coordinate Mg(2+).

This sequence belongs to the anthranilate phosphoribosyltransferase family. In terms of assembly, homodimer. Mg(2+) serves as cofactor.

It catalyses the reaction N-(5-phospho-beta-D-ribosyl)anthranilate + diphosphate = 5-phospho-alpha-D-ribose 1-diphosphate + anthranilate. It participates in amino-acid biosynthesis; L-tryptophan biosynthesis; L-tryptophan from chorismate: step 2/5. Its function is as follows. Catalyzes the transfer of the phosphoribosyl group of 5-phosphorylribose-1-pyrophosphate (PRPP) to anthranilate to yield N-(5'-phosphoribosyl)-anthranilate (PRA). The sequence is that of Anthranilate phosphoribosyltransferase from Pseudomonas savastanoi pv. phaseolicola (strain 1448A / Race 6) (Pseudomonas syringae pv. phaseolicola (strain 1448A / Race 6)).